A 676-amino-acid polypeptide reads, in one-letter code: Transketolase 7 (676 aa).

H36 serves as a coordination point for substrate. Thiamine diphosphate contacts are provided by residues H76 and 125–127; that span reads GPL. D166 contacts Mg(2+). 2 residues coordinate thiamine diphosphate: G167 and N196. Positions 196 and 198 each coordinate Mg(2+). The substrate site is built by H273, R367, and S394. H273 contacts thiamine diphosphate. The thiamine diphosphate site is built by E421 and F448. Residue E421 is the Proton donor of the active site. Substrate is bound by residues H472, D480, and R531.

This sequence belongs to the transketolase family. In terms of assembly, homodimer. Mg(2+) is required as a cofactor. Requires Ca(2+) as cofactor. The cofactor is Mn(2+). It depends on Co(2+) as a cofactor. Thiamine diphosphate serves as cofactor. Leaves and roots.

The catalysed reaction is D-sedoheptulose 7-phosphate + D-glyceraldehyde 3-phosphate = aldehydo-D-ribose 5-phosphate + D-xylulose 5-phosphate. Functionally, could be involved in the conversion of sugars, which are a major phenomenon in the rehydration process. In terms of biological role, catalyzes the transfer of a two-carbon ketol group from a ketose donor to an aldose acceptor, via a covalent intermediate with the cofactor thiamine pyrophosphate. The polypeptide is Transketolase 7 (TKT7) (Craterostigma plantagineum (Blue gem)).